Here is a 630-residue protein sequence, read N- to C-terminus: 1-deoxy-D-xylulose-5-phosphate synthase (630 aa).

Residues His80 and 121 to 123 (GHS) contribute to the thiamine diphosphate site. Asp152 lines the Mg(2+) pocket. Thiamine diphosphate-binding positions include 153–154 (GA), Asn181, Tyr288, and Glu370. Asn181 is a Mg(2+) binding site.

The protein belongs to the transketolase family. DXPS subfamily. As to quaternary structure, homodimer. The cofactor is Mg(2+). Requires thiamine diphosphate as cofactor.

It catalyses the reaction D-glyceraldehyde 3-phosphate + pyruvate + H(+) = 1-deoxy-D-xylulose 5-phosphate + CO2. It participates in metabolic intermediate biosynthesis; 1-deoxy-D-xylulose 5-phosphate biosynthesis; 1-deoxy-D-xylulose 5-phosphate from D-glyceraldehyde 3-phosphate and pyruvate: step 1/1. Functionally, catalyzes the acyloin condensation reaction between C atoms 2 and 3 of pyruvate and glyceraldehyde 3-phosphate to yield 1-deoxy-D-xylulose-5-phosphate (DXP). This chain is 1-deoxy-D-xylulose-5-phosphate synthase, found in Colwellia psychrerythraea (strain 34H / ATCC BAA-681) (Vibrio psychroerythus).